Reading from the N-terminus, the 192-residue chain is MELLGQKVKEDGVVIDEKILKVDGFLNHQIDAKLMNEVGRTFYEQFKDKGITKILTIEASGIAPAIMAALHFDVPCLFAKKAKPSTLTDGYYETSIHSFTKNKTSTVIVSKEFLSEEDTVLIIDDFLANGDASLGLYDIAQQANAKTAGIGIVVEKSFQNGHQRLEEAGLTVSSLCKVASLEGNKVTLVGEE.

Xanthine-binding residues include Leu-20 and Asn-27. 5-phospho-alpha-D-ribose 1-diphosphate is bound at residue 128–132; that stretch reads ANGDA. Lys-156 provides a ligand contact to xanthine.

The protein belongs to the purine/pyrimidine phosphoribosyltransferase family. Xpt subfamily. Homodimer.

It is found in the cytoplasm. The catalysed reaction is XMP + diphosphate = xanthine + 5-phospho-alpha-D-ribose 1-diphosphate. Its pathway is purine metabolism; XMP biosynthesis via salvage pathway; XMP from xanthine: step 1/1. Converts the preformed base xanthine, a product of nucleic acid breakdown, to xanthosine 5'-monophosphate (XMP), so it can be reused for RNA or DNA synthesis. The sequence is that of Xanthine phosphoribosyltransferase from Staphylococcus aureus (strain Mu3 / ATCC 700698).